The primary structure comprises 430 residues: Zinc finger and SCAN domain-containing protein 4 (430 aa).

The tract at residues 1–38 (MASDLRISFQGEPSRNDPGSENLEHKPSQGPAVQEEEE) is disordered. An SCAN box domain is found at 44–126 (RTQLSLLQNS…KFMEDLTDES (83 aa)). Residues 164–185 (GSPTGTDMETPSWTPQDTSLET) are compositionally biased toward polar residues. 3 disordered regions span residues 164–196 (GSPT…KENG), 224–257 (YPRP…SLKG), and 281–300 (EPVP…GHQE). 4 C2H2-type zinc fingers span residues 309-331 (YRCE…QRRH), 337-359 (FTCA…QKIH), 365-387 (FTCS…ERIH), and 393-415 (YECS…LRNH).

It localises to the nucleus. It is found in the chromosome. The protein resides in the telomere. Embryonic stem (ES) cell-specific transcription factor required to regulate ES cell pluripotency. Binds telomeres and plays a key role in genomic stability in ES cells by regulating telomere elongation. Acts as an activator of spontaneous telomere sister chromatid exchange (T-SCE) and telomere elongation in undifferentiated ES cells. The protein is Zinc finger and SCAN domain-containing protein 4 (ZSCAN4) of Ailuropoda melanoleuca (Giant panda).